A 280-amino-acid polypeptide reads, in one-letter code: Large ribosomal subunit protein uL2 (280 aa).

Residues N226–R280 form a disordered region. Basic residues-rich tracts occupy residues K254 to A264 and R271 to R280.

It belongs to the universal ribosomal protein uL2 family. As to quaternary structure, part of the 50S ribosomal subunit. Forms a bridge to the 30S subunit in the 70S ribosome.

Its function is as follows. One of the primary rRNA binding proteins. Required for association of the 30S and 50S subunits to form the 70S ribosome, for tRNA binding and peptide bond formation. It has been suggested to have peptidyltransferase activity; this is somewhat controversial. Makes several contacts with the 16S rRNA in the 70S ribosome. This is Large ribosomal subunit protein uL2 from Roseobacter denitrificans (strain ATCC 33942 / OCh 114) (Erythrobacter sp. (strain OCh 114)).